A 431-amino-acid polypeptide reads, in one-letter code: Histidinol dehydrogenase (431 aa).

NAD(+) is bound by residues Tyr-130, Gln-191, and Asn-214. 3 residues coordinate substrate: Ser-237, Gln-259, and His-262. The Zn(2+) site is built by Gln-259 and His-262. Residues Glu-327 and His-328 each act as proton acceptor in the active site. 4 residues coordinate substrate: His-328, Asp-361, Glu-415, and His-420. Asp-361 contributes to the Zn(2+) binding site. His-420 contributes to the Zn(2+) binding site.

It belongs to the histidinol dehydrogenase family. Zn(2+) is required as a cofactor.

The catalysed reaction is L-histidinol + 2 NAD(+) + H2O = L-histidine + 2 NADH + 3 H(+). It functions in the pathway amino-acid biosynthesis; L-histidine biosynthesis; L-histidine from 5-phospho-alpha-D-ribose 1-diphosphate: step 9/9. Catalyzes the sequential NAD-dependent oxidations of L-histidinol to L-histidinaldehyde and then to L-histidine. This Syntrophotalea carbinolica (strain DSM 2380 / NBRC 103641 / GraBd1) (Pelobacter carbinolicus) protein is Histidinol dehydrogenase.